Here is a 397-residue protein sequence, read N- to C-terminus: Neuroplastin (397 aa).

An N-terminal signal peptide occupies residues 1-28 (MSGSSLPGALALSLLLVSGSLLPGPGAA). 3 consecutive Ig-like domains span residues 29 to 134 (QNAG…PSIT), 148 to 234 (PRIV…IEVK), and 237 to 327 (PDIT…ASVS). Over 29–338 (QNAGFVKSPM…VLRVRSHLAP (310 aa)) the chain is Extracellular. A disulfide bridge connects residues cysteine 52 and cysteine 116. The interval 149–161 (RIVTSEEVIIRES) is narpin; mediates binding with FGFR1 and has antidepressant-like activity. A disulfide bridge links cysteine 169 with cysteine 217. N-linked (GlcNAc...) asparagine glycans are attached at residues asparagine 170, asparagine 196, asparagine 228, asparagine 283, asparagine 295, and asparagine 316. Cysteines 258 and 315 form a disulfide. The chain crosses the membrane as a helical span at residues 339 to 359 (LWPFLGILAEIIILVVIIVVY). The Cytoplasmic portion of the chain corresponds to 360-397 (EKRKRPDEVPDDDEPAGPMKTNSTNNHKDKNLRQRNTN). Residues 364-397 (RPDEVPDDDEPAGPMKTNSTNNHKDKNLRQRNTN) are disordered.

In terms of assembly, interacts with ATP2B1; this interaction stabilizes ATP2B1 and increases ATPase activity; this interaction controls T cell calcium homeostasis following T cell activation. Interacts with XKR8; promoting its localization at the cell membrane. N-glycosylated. In terms of tissue distribution, isoform 1 and isoform 2 are widely expressed with variable levels in brain. Isoform 1 is expressed in cerebellum and midbrain. Isoform 1 and isoform 2 are expressed in cerebral cortex, hippocampus and striatum. Isoform 2 is more abundant in the cerebral cortex than isoform 1.

It is found in the cell membrane. It localises to the postsynaptic density. Probable homophilic and heterophilic cell adhesion molecule involved in long term potentiation at hippocampal excitatory synapses through activation of p38MAPK. May also regulate neurite outgrowth by activating the FGFR1 signaling pathway. May play a role in synaptic plasticity. Also acts as a chaperone for ATP2B1; stabilizes ATP2B1 and increases its ATPase activity. Promotes localization of XKR8 at the cell membrane. The chain is Neuroplastin (Nptn) from Mus musculus (Mouse).